The chain runs to 384 residues: Chaperone protein DnaJ (384 aa).

The region spanning 5–70 (DFYQVLGVSK…QKRQMYDQYG (66 aa)) is the J domain. The CR-type zinc finger occupies 138–216 (GKTVELEIPT…CHGHGRKEET (79 aa)). The Zn(2+) site is built by Cys-151, Cys-154, Cys-168, Cys-171, Cys-190, Cys-193, Cys-204, and Cys-207. CXXCXGXG motif repeat units follow at residues 151–158 (CRDCNGSG), 168–175 (CGHCHGSG), 190–197 (CPQCRGTG), and 204–211 (CRTCHGHG).

The protein belongs to the DnaJ family. As to quaternary structure, homodimer. The cofactor is Zn(2+).

Its subcellular location is the cytoplasm. Its function is as follows. Participates actively in the response to hyperosmotic and heat shock by preventing the aggregation of stress-denatured proteins and by disaggregating proteins, also in an autonomous, DnaK-independent fashion. Unfolded proteins bind initially to DnaJ; upon interaction with the DnaJ-bound protein, DnaK hydrolyzes its bound ATP, resulting in the formation of a stable complex. GrpE releases ADP from DnaK; ATP binding to DnaK triggers the release of the substrate protein, thus completing the reaction cycle. Several rounds of ATP-dependent interactions between DnaJ, DnaK and GrpE are required for fully efficient folding. Also involved, together with DnaK and GrpE, in the DNA replication of plasmids through activation of initiation proteins. The sequence is that of Chaperone protein DnaJ from Idiomarina loihiensis (strain ATCC BAA-735 / DSM 15497 / L2-TR).